The sequence spans 169 residues: Ribosome maturation factor RimP (169 aa).

Belongs to the RimP family.

The protein resides in the cytoplasm. Required for maturation of 30S ribosomal subunits. The sequence is that of Ribosome maturation factor RimP from Pseudomonas putida (strain ATCC 700007 / DSM 6899 / JCM 31910 / BCRC 17059 / LMG 24140 / F1).